The following is a 245-amino-acid chain: Ribonuclease P protein component 3 (245 aa).

The protein belongs to the eukaryotic/archaeal RNase P protein component 3 family. In terms of assembly, consists of a catalytic RNA component and at least 4-5 protein subunits.

The protein localises to the cytoplasm. The enzyme catalyses Endonucleolytic cleavage of RNA, removing 5'-extranucleotides from tRNA precursor.. Its function is as follows. Part of ribonuclease P, a protein complex that generates mature tRNA molecules by cleaving their 5'-ends. This is Ribonuclease P protein component 3 from Methanothermobacter thermautotrophicus (strain ATCC 29096 / DSM 1053 / JCM 10044 / NBRC 100330 / Delta H) (Methanobacterium thermoautotrophicum).